Consider the following 202-residue polypeptide: uncharacterized protein (202 aa).

This is an uncharacterized protein from Escherichia coli (Bacteriophage T4).